A 210-amino-acid polypeptide reads, in one-letter code: Orotate phosphoribosyltransferase (210 aa).

Residues arginine 97, lysine 101, histidine 103, and 123 to 131 (EDLISTGGS) each bind 5-phospho-alpha-D-ribose 1-diphosphate. Serine 127 is a binding site for orotate.

It belongs to the purine/pyrimidine phosphoribosyltransferase family. PyrE subfamily. As to quaternary structure, homodimer. Mg(2+) is required as a cofactor.

It carries out the reaction orotidine 5'-phosphate + diphosphate = orotate + 5-phospho-alpha-D-ribose 1-diphosphate. The protein operates within pyrimidine metabolism; UMP biosynthesis via de novo pathway; UMP from orotate: step 1/2. Its function is as follows. Catalyzes the transfer of a ribosyl phosphate group from 5-phosphoribose 1-diphosphate to orotate, leading to the formation of orotidine monophosphate (OMP). This is Orotate phosphoribosyltransferase from Porphyromonas gingivalis (strain ATCC BAA-308 / W83).